We begin with the raw amino-acid sequence, 89 residues long: Small ribosomal subunit protein uS14A (89 aa).

It belongs to the universal ribosomal protein uS14 family. As to quaternary structure, part of the 30S ribosomal subunit. Contacts proteins S3 and S10.

In terms of biological role, binds 16S rRNA, required for the assembly of 30S particles and may also be responsible for determining the conformation of the 16S rRNA at the A site. This is Small ribosomal subunit protein uS14A from Listeria welshimeri serovar 6b (strain ATCC 35897 / DSM 20650 / CCUG 15529 / CIP 8149 / NCTC 11857 / SLCC 5334 / V8).